The chain runs to 307 residues: Ribonuclease Z (307 aa).

Residues histidine 63, histidine 65, aspartate 67, histidine 68, histidine 141, aspartate 212, and histidine 270 each coordinate Zn(2+). The active-site Proton acceptor is aspartate 67.

This sequence belongs to the RNase Z family. In terms of assembly, homodimer. Requires Zn(2+) as cofactor.

The catalysed reaction is Endonucleolytic cleavage of RNA, removing extra 3' nucleotides from tRNA precursor, generating 3' termini of tRNAs. A 3'-hydroxy group is left at the tRNA terminus and a 5'-phosphoryl group is left at the trailer molecule.. In terms of biological role, zinc phosphodiesterase, which displays some tRNA 3'-processing endonuclease activity. Probably involved in tRNA maturation, by removing a 3'-trailer from precursor tRNA. The polypeptide is Ribonuclease Z (Bacillus cereus (strain B4264)).